We begin with the raw amino-acid sequence, 108 residues long: Abdominal ganglion neuropeptide R3-14 (108 aa).

Positions 1–23 (MQVLHLCLAVSIAVALLSQAAWS) are cleaved as a signal peptide. Pyrrolidone carboxylic acid (Glu); partial occurs at positions 24 and 52. Residue Q66 is modified to Pyrrolidone carboxylic acid.

The partial formation of pyroglutamate from N-terminal glutamic acid in peptides isolated from single cells is detected by mass spectrometry. There are indications this modification depends on a heat sensitive factor. Neurons R3-R14. A cluster of 12 giant neurons located on the right side of the abdominal ganglion.

Its subcellular location is the secreted. HRBP is a myoactive peptide that excites Aplysia heart and enhances gut motility in vitro. In Aplysia californica (California sea hare), this protein is Abdominal ganglion neuropeptide R3-14.